A 494-amino-acid chain; its full sequence is Argininosuccinate lyase (494 aa).

It belongs to the lyase 1 family. Argininosuccinate lyase subfamily.

Its subcellular location is the cytoplasm. The catalysed reaction is 2-(N(omega)-L-arginino)succinate = fumarate + L-arginine. It participates in amino-acid biosynthesis; L-arginine biosynthesis; L-arginine from L-ornithine and carbamoyl phosphate: step 3/3. In Methanosphaerula palustris (strain ATCC BAA-1556 / DSM 19958 / E1-9c), this protein is Argininosuccinate lyase.